Consider the following 245-residue polypeptide: 4-hydroxy-tetrahydrodipicolinate reductase (245 aa).

Residues 7–12 (GAKGKV), 75–77 (GTT), and 102–105 (APNF) each bind NAD(+). His-132 (proton donor/acceptor) is an active-site residue. Residue His-133 participates in (S)-2,3,4,5-tetrahydrodipicolinate binding. Catalysis depends on Lys-136, which acts as the Proton donor. (S)-2,3,4,5-tetrahydrodipicolinate is bound at residue 142–143 (GT).

It belongs to the DapB family.

It localises to the cytoplasm. It catalyses the reaction (S)-2,3,4,5-tetrahydrodipicolinate + NAD(+) + H2O = (2S,4S)-4-hydroxy-2,3,4,5-tetrahydrodipicolinate + NADH + H(+). The catalysed reaction is (S)-2,3,4,5-tetrahydrodipicolinate + NADP(+) + H2O = (2S,4S)-4-hydroxy-2,3,4,5-tetrahydrodipicolinate + NADPH + H(+). Its pathway is amino-acid biosynthesis; L-lysine biosynthesis via DAP pathway; (S)-tetrahydrodipicolinate from L-aspartate: step 4/4. In terms of biological role, catalyzes the conversion of 4-hydroxy-tetrahydrodipicolinate (HTPA) to tetrahydrodipicolinate. This is 4-hydroxy-tetrahydrodipicolinate reductase from Mycobacterium tuberculosis (strain ATCC 25177 / H37Ra).